Reading from the N-terminus, the 597-residue chain is Elongation factor 4 (597 aa).

The tr-type G domain maps to 2-184 (QHIRNFSIIA…TIVARVPAPQ (183 aa)). GTP is bound by residues 14-19 (DHGKST) and 131-134 (NKMD).

The protein belongs to the TRAFAC class translation factor GTPase superfamily. Classic translation factor GTPase family. LepA subfamily.

The protein resides in the cell inner membrane. It carries out the reaction GTP + H2O = GDP + phosphate + H(+). Its function is as follows. Required for accurate and efficient protein synthesis under certain stress conditions. May act as a fidelity factor of the translation reaction, by catalyzing a one-codon backward translocation of tRNAs on improperly translocated ribosomes. Back-translocation proceeds from a post-translocation (POST) complex to a pre-translocation (PRE) complex, thus giving elongation factor G a second chance to translocate the tRNAs correctly. Binds to ribosomes in a GTP-dependent manner. The polypeptide is Elongation factor 4 (Bordetella petrii (strain ATCC BAA-461 / DSM 12804 / CCUG 43448)).